The chain runs to 308 residues: Insoluble matrix shell protein 4 (308 aa).

Disordered stretches follow at residues 1-21 (HGNG…GNGY), 47-104 (NTNS…PNAV), and 134-250 (YDSN…NTNS). Residues 47 to 99 (NTNSLNGNNNGNSNNNGNGNNNGNSNNNGNGNNNGNTNNGNSYDSNTNDDSNS) are compositionally biased toward low complexity.

As to expression, component of the acid-insoluble organic matrix of the calcified shell.

It is found in the secreted. This Ruditapes philippinarum (Japanese carpet shell) protein is Insoluble matrix shell protein 4.